The primary structure comprises 272 residues: Undecaprenyl-diphosphatase (272 aa).

7 helical membrane passes run 22-42, 45-65, 92-112, 118-138, 189-209, 228-248, and 251-271; these read FLPVSSTGHMIIVGHMLGFTG, AETFEVIIQLGSILAVVVVFW, SHIILAMLPAVTLGLMFHDVI, PQSVMYALVIGGVLLITAEIL, YTASEFSFILAVPMMMGASGL, VGFVTAFVVALVAIKTFLALI, and ISFIPFAIYRFIVAAAVYWVF.

The protein belongs to the UppP family.

The protein localises to the cell inner membrane. The catalysed reaction is di-trans,octa-cis-undecaprenyl diphosphate + H2O = di-trans,octa-cis-undecaprenyl phosphate + phosphate + H(+). In terms of biological role, catalyzes the dephosphorylation of undecaprenyl diphosphate (UPP). Confers resistance to bacitracin. The protein is Undecaprenyl-diphosphatase of Photorhabdus laumondii subsp. laumondii (strain DSM 15139 / CIP 105565 / TT01) (Photorhabdus luminescens subsp. laumondii).